The following is a 348-amino-acid chain: MAEELFKTLQNAKECHSLLKKHLTKERFDKLKGLKTKFGGTLADCIRSGCKNPDSGVGIYASDPDAYTVFAEVLDAVIMDYHKIDKVHHPIPDFGDVNNLNIGDLDPSGNMIVSTRVRVGRSHDSFGFPPVLKKDDRIKMEQVSVEALKSLDGELAGSYFPLANMSADVQKQLTEDHFLFNDSDRFLKAASGYDDWPIGRGIYFSENKTFLCWVNEEDHLRLISMQKGGNLGEVYKRLVSAINKMEKKLNFAKKDNMGYLTFCPSNLGTTMRASVHIKIPKLSQRSDFKSICDKYNLQARGIHGEHTESVCGVYDISNKRRMGLTEYEAVTEMMRGVNEIIREETNST.

The region spanning 1 to 83 (MAEELFKTLQ…LDAVIMDYHK (83 aa)) is the Phosphagen kinase N-terminal domain. A substrate-binding site is contributed by 56 to 60 (GVGIY). The Phosphagen kinase C-terminal domain maps to 111 to 347 (MIVSTRVRVG…NEIIREETNS (237 aa)). ATP is bound by residues 114 to 118 (STRVR) and histidine 177. Substrate is bound at residue glutamate 217. Position 221 (arginine 221) interacts with ATP. Substrate is bound at residue cysteine 263. ATP-binding positions include 272-276 (RASVH) and 300-305 (RGIHGE). Glutamate 305 is a substrate binding site.

It belongs to the ATP:guanido phosphotransferase family. Muscle (at protein level).

It carries out the reaction L-arginine + ATP = N(omega)-phospho-L-arginine + ADP + H(+). In terms of biological role, catalyzes the reversible transfer of high energy ATP gamma-phosphate group to L-arginine. This is Arginine kinase Oct f 2 from Amphioctopus fangsiao (Ocellated octopus).